The sequence spans 112 residues: Cytochrome c-551 (112 aa).

The N-terminal stretch at 1–20 (MKSKLSILMIGFALSVLLAA) is a signal peptide. Cys-21 carries N-palmitoyl cysteine lipidation. The S-diacylglycerol cysteine moiety is linked to residue Cys-21. A compositionally biased stretch (basic and acidic residues) spans 25 to 35 (DAKEEKTDTGS). Residues 25–44 (DAKEEKTDTGSKTEATASEG) are disordered. Residues 39–112 (ATASEGEELY…VIAKWLSEKK (74 aa)) form the Cytochrome c domain. Heme c-binding residues include Cys-52, Cys-55, His-56, and Met-91.

Post-translationally, binds 1 heme c group covalently per subunit.

The protein resides in the cell membrane. Electron carrier protein. In Bacillus subtilis (strain 168), this protein is Cytochrome c-551 (cccB).